A 273-amino-acid chain; its full sequence is 4-hydroxy-tetrahydrodipicolinate reductase (273 aa).

Residues 8-13, Glu34, 102-104, and 128-131 contribute to the NAD(+) site; these read GACGRM, GTT, and APNM. Residue His160 is the Proton donor/acceptor of the active site. His161 provides a ligand contact to (S)-2,3,4,5-tetrahydrodipicolinate. The Proton donor role is filled by Lys164. Residue 170 to 171 participates in (S)-2,3,4,5-tetrahydrodipicolinate binding; it reads GT.

It belongs to the DapB family.

Its subcellular location is the cytoplasm. The catalysed reaction is (S)-2,3,4,5-tetrahydrodipicolinate + NAD(+) + H2O = (2S,4S)-4-hydroxy-2,3,4,5-tetrahydrodipicolinate + NADH + H(+). It carries out the reaction (S)-2,3,4,5-tetrahydrodipicolinate + NADP(+) + H2O = (2S,4S)-4-hydroxy-2,3,4,5-tetrahydrodipicolinate + NADPH + H(+). Its pathway is amino-acid biosynthesis; L-lysine biosynthesis via DAP pathway; (S)-tetrahydrodipicolinate from L-aspartate: step 4/4. Its function is as follows. Catalyzes the conversion of 4-hydroxy-tetrahydrodipicolinate (HTPA) to tetrahydrodipicolinate. This Methanothermobacter thermautotrophicus (strain ATCC 29096 / DSM 1053 / JCM 10044 / NBRC 100330 / Delta H) (Methanobacterium thermoautotrophicum) protein is 4-hydroxy-tetrahydrodipicolinate reductase.